Consider the following 140-residue polypeptide: Histone H2B (140 aa).

The span at 1–10 (MPPKAAEKKP) shows a compositional bias: basic and acidic residues. The segment at 1-48 (MPPKAAEKKPSTGGKAPAGKAPAEKKEAGKKTAAAASGDKKKRGKTRK) is disordered. Lys8 and Lys9 each carry N6-acetyllysine; alternate. Residues Lys8 and Lys9 each participate in a glycyl lysine isopeptide (Lys-Gly) (interchain with G-Cter in SUMO); alternate cross-link. The segment covering 11–21 (STGGKAPAGKA) has biased composition (low complexity). An N6-acetyllysine modification is found at Lys15. Lys25 bears the N6-acetyllysine; alternate mark. Lys25 participates in a covalent cross-link: Glycyl lysine isopeptide (Lys-Gly) (interchain with G-Cter in SUMO); alternate. Lys26 is covalently cross-linked (Glycyl lysine isopeptide (Lys-Gly) (interchain with G-Cter in SUMO)). Lys134 participates in a covalent cross-link: Glycyl lysine isopeptide (Lys-Gly) (interchain with G-Cter in ubiquitin).

The protein belongs to the histone H2B family. In terms of assembly, the nucleosome is a histone octamer containing two molecules each of H2A, H2B, H3 and H4 assembled in one H3-H4 heterotetramer and two H2A-H2B heterodimers. The octamer wraps approximately 147 bp of DNA. Monoubiquitinated by the ubc2-bre1 complex to form H2BK123ub1. H2BK123ub1 gives a specific tag for epigenetic transcriptional activation and is also prerequisite for H3K4me and H3K79me formation. H2BK123ub1 also modulates the formation of double-strand breaks during meiosis and is a prerequisite for DNA-damage checkpoint activation. In terms of processing, acetylated by gcn5 to form H2BK11ac and H2BK16ac. H2BK16ac can also be formed by esa1. Acetylation of N-terminal lysines and particularly formation of H2BK11acK16ac has a positive effect on transcription. Post-translationally, sumoylation to form H2BK6su or H2BK7su, and probably also H2BK16su or H2BK17su, occurs preferentially near the telomeres and represses gene transcription.

It is found in the nucleus. It localises to the chromosome. Its function is as follows. Core component of nucleosome. Nucleosomes wrap and compact DNA into chromatin, limiting DNA accessibility to the cellular machineries which require DNA as a template. Histones thereby play a central role in transcription regulation, DNA repair, DNA replication and chromosomal stability. DNA accessibility is regulated via a complex set of post-translational modifications of histones, also called histone code, and nucleosome remodeling. In Aspergillus clavatus (strain ATCC 1007 / CBS 513.65 / DSM 816 / NCTC 3887 / NRRL 1 / QM 1276 / 107), this protein is Histone H2B (htb1).